The chain runs to 222 residues: Cytochrome b6 (222 aa).

The chain crosses the membrane as a helical span at residues 39–59; the sequence is IFYCLGGITLVCFLVQFATGF. Residue cysteine 42 coordinates heme c. Residues histidine 93 and histidine 107 each coordinate heme b. 3 consecutive transmembrane segments (helical) span residues 97–117, 123–143, and 193–213; these read ASMM…TGGF, LTWM…VTGY, and LHTF…FLMI. Heme b contacts are provided by histidine 194 and histidine 209.

Belongs to the cytochrome b family. PetB subfamily. In terms of assembly, the 4 large subunits of the cytochrome b6-f complex are cytochrome b6, subunit IV (17 kDa polypeptide, PetD), cytochrome f and the Rieske protein, while the 4 small subunits are PetG, PetL, PetM and PetN. The complex functions as a dimer. Requires heme b as cofactor. Heme c serves as cofactor.

Its subcellular location is the cellular thylakoid membrane. Its function is as follows. Component of the cytochrome b6-f complex, which mediates electron transfer between photosystem II (PSII) and photosystem I (PSI), cyclic electron flow around PSI, and state transitions. This Crocosphaera subtropica (strain ATCC 51142 / BH68) (Cyanothece sp. (strain ATCC 51142)) protein is Cytochrome b6.